Here is a 1658-residue protein sequence, read N- to C-terminus: Collagen alpha-1(XXVII) chain B (1658 aa).

Residues 1–38 form the signal peptide; sequence MEPDNTPSSRLRAAGVGGRAVFFCMVLYCTCCLRLAQA. Positions 66–229 constitute a Laminin G-like domain; the sequence is GVILTTRARI…NYCKYIKKQC (164 aa). The segment covering 308-323 has biased composition (polar residues); it reads SIRNRTSQISPKPTQQ. Disordered regions lie at residues 308–332, 345–364, 427–550, 571–614, 637–1332, and 1377–1415; these read SIRNRTSQISPKPTQQNRKKAKKER, VTDSPTSQQQNQVDIPTTTT, GLKG…GNMG, GERG…APGP, GPKG…DAGE, and IIGPSGNPGPQGDKGNKGEMGVQGPRGPPGPRGPPGPPG. The segment at 424–1417 is triple-helical region; sequence ELTGLKGEPG…RGPPGPPGLP (994 aa). Collagen-like domains are found at residues 425–478, 493–552, 556–615, 622–681, 685–744, 748–807, and 811–870; these read LTGL…GNPG, GLVG…MGPK, GFIG…PGPV, GDMG…PGLP, GKPG…PGLE, GPVG…MGLA, and GDRG…RGPD. A compositionally biased stretch (pro residues) spans 434 to 444; the sequence is LPGPPGPPGQP. The segment covering 491-506 has biased composition (low complexity); that stretch reads DPGLVGLPGQPGQPGR. Composition is skewed to low complexity over residues 657–666 and 678–692; these read LGLPGEPGEP and PGLPGVQGKPGPQGK. The segment covering 733–742 has biased composition (gly residues); that stretch reads GIPGPGGLPG. Composition is skewed to low complexity over residues 837-852 and 875-890; these read RGLSGPAGAPGPHGSR and EKGMMGMKGPEGPPGK. Collagen-like domains follow at residues 892-951, 952-1011, 1024-1083, 1084-1137, 1139-1198, 1199-1258, 1268-1327, and 1361-1420; these read GLSG…IGLP, GKAG…VGLE, GTEG…IGPK, GSRG…DGKV, GPPG…KGSK, GNKG…PGDL, GKPG…KGQP, and GPQG…PAVA. Residues 1040 to 1058 show a composition bias toward basic and acidic residues; the sequence is PEGKPGKIGERGKPGEKGS. Over residues 1112-1124 the composition is skewed to low complexity; the sequence is HQGPQGSLGSPGP. Positions 1125–1137 are enriched in basic and acidic residues; sequence KGEKGEQGDDGKV. Residues 1215 to 1230 show a composition bias toward low complexity; that stretch reads NRGSPGPVGVPGPRGV. Residues 1307–1316 show a composition bias toward gly residues; that stretch reads GLNGGMGFPG. Residues 1402 to 1415 show a composition bias toward pro residues; the sequence is RGPPGPRGPPGPPG. A propeptide spans 1421–1658 (C-terminal propeptide); sequence FSHENEALGA…HLEVGPVCFL (238 aa). The Fibrillar collagen NC1 domain occupies 1458 to 1658; sequence SEIFKTLHYL…HLEVGPVCFL (201 aa). 3 cysteine pairs are disulfide-bonded: C1488–C1520, C1529–C1656, and C1565–C1609. Ca(2+) is bound by residues D1506, N1508, C1511, and D1514. N-linked (GlcNAc...) asparagine glycosylation is present at N1567.

It belongs to the fibrillar collagen family. Weakly expressed in the notochord from the 6 somite stage. Expressed throughout the notochord at 13 somites, then becomes restricted to the distal tip of the notochord by 24 hpf. Also expressed in head cartilages by 48 hpf.

It is found in the secreted. It localises to the extracellular space. Its subcellular location is the extracellular matrix. Its function is as follows. May play a role during the calcification of cartilage and the transition of cartilage to bone. Together with col27a1a, plays a role in development of the notochord and axial skeleton. The sequence is that of Collagen alpha-1(XXVII) chain B (col27a1b) from Danio rerio (Zebrafish).